A 673-amino-acid chain; its full sequence is DNA ligase (673 aa).

Residues 33-37 (DAEYD), 82-83 (SL), and Glu115 contribute to the NAD(+) site. Lys117 acts as the N6-AMP-lysine intermediate in catalysis. NAD(+) is bound by residues Arg138, Glu175, Lys292, and Lys316. The Zn(2+) site is built by Cys410, Cys413, Cys428, and Cys434. The BRCT domain occupies 593 to 673 (VGDNPFKEKT…TFLAWSKPYL (81 aa)).

The protein belongs to the NAD-dependent DNA ligase family. LigA subfamily. Requires Mg(2+) as cofactor. It depends on Mn(2+) as a cofactor.

The catalysed reaction is NAD(+) + (deoxyribonucleotide)n-3'-hydroxyl + 5'-phospho-(deoxyribonucleotide)m = (deoxyribonucleotide)n+m + AMP + beta-nicotinamide D-nucleotide.. In terms of biological role, DNA ligase that catalyzes the formation of phosphodiester linkages between 5'-phosphoryl and 3'-hydroxyl groups in double-stranded DNA using NAD as a coenzyme and as the energy source for the reaction. It is essential for DNA replication and repair of damaged DNA. The protein is DNA ligase of Pasteurella multocida (strain Pm70).